We begin with the raw amino-acid sequence, 348 residues long: Inosamine-phosphate amidinotransferase 1 (348 aa).

Catalysis depends on residues Asp-179 and His-227. Cys-332 (amidino-cysteine intermediate) is an active-site residue.

It belongs to the amidinotransferase family. Homodimer.

The catalysed reaction is 1-amino-1-deoxy-scyllo-inositol 4-phosphate + L-arginine = 1-guanidino-1-deoxy-scyllo-inositol 4-phosphate + L-ornithine. Its pathway is antibiotic biosynthesis; streptomycin biosynthesis. Catalyzes two non-consecutive transamidination reactions. It converts scyllo-inosamine 4-phosphate into N-amidino-scyllo-inosamine 4-phosphate and N1-amidinostreptamine 6-phosphate into streptidine 6-phosphate. In Streptomyces glaucescens, this protein is Inosamine-phosphate amidinotransferase 1 (strB1).